Consider the following 132-residue polypeptide: ATP synthase epsilon chain (132 aa).

The protein belongs to the ATPase epsilon chain family. As to quaternary structure, F-type ATPases have 2 components, CF(1) - the catalytic core - and CF(0) - the membrane proton channel. CF(1) has five subunits: alpha(3), beta(3), gamma(1), delta(1), epsilon(1). CF(0) has three main subunits: a, b and c.

Its subcellular location is the cell inner membrane. Its function is as follows. Produces ATP from ADP in the presence of a proton gradient across the membrane. In Anaeromyxobacter sp. (strain Fw109-5), this protein is ATP synthase epsilon chain.